Here is a 737-residue protein sequence, read N- to C-terminus: Catalase-peroxidase (737 aa).

Positions 1–23 (MLKKILPVLITLAIVHNTPTAWA) are cleaved as a signal peptide. A cross-link (tryptophyl-tyrosyl-methioninium (Trp-Tyr) (with M-249)) is located at residues 102 to 223 (WHGAGTYRIY…LAATQMGLIY (122 aa)). Catalysis depends on His103, which acts as the Proton acceptor. The tryptophyl-tyrosyl-methioninium (Tyr-Met) (with W-102) cross-link spans 223–249 (YVNPEGPNGKPDPVAAAKDIREAFARM). His264 provides a ligand contact to heme b.

Belongs to the peroxidase family. Peroxidase/catalase subfamily. As to quaternary structure, homodimer or homotetramer. Heme b serves as cofactor. In terms of processing, formation of the three residue Trp-Tyr-Met cross-link is important for the catalase, but not the peroxidase activity of the enzyme.

The catalysed reaction is H2O2 + AH2 = A + 2 H2O. It catalyses the reaction 2 H2O2 = O2 + 2 H2O. Its function is as follows. Bifunctional enzyme with both catalase and broad-spectrum peroxidase activity. The protein is Catalase-peroxidase of Yersinia pseudotuberculosis serotype I (strain IP32953).